Here is a 445-residue protein sequence, read N- to C-terminus: Chromosomal replication initiator protein DnaA (445 aa).

The segment at 1–71 (MEEVWLQAQS…SVQSLTDSQT (71 aa)) is domain I, interacts with DnaA modulators. Positions 71–108 (TKIELLIAKPKTEKPKQPAASEVTAAEPEACSGPDHST) are domain II. Residues 83 to 106 (EKPKQPAASEVTAAEPEACSGPDH) are disordered. Positions 109–325 (NLNPKYTFDT…GMLIRLGAVS (217 aa)) are domain III, AAA+ region. ATP contacts are provided by Gly153, Gly155, Lys156, and Thr157. Residues 326 to 445 (SLTGKNITLD…VDTLRKGLLS (120 aa)) are domain IV, binds dsDNA.

It belongs to the DnaA family. As to quaternary structure, oligomerizes as a right-handed, spiral filament on DNA at oriC.

The protein localises to the cytoplasm. Its function is as follows. Plays an essential role in the initiation and regulation of chromosomal replication. ATP-DnaA binds to the origin of replication (oriC) to initiate formation of the DNA replication initiation complex once per cell cycle. Binds the DnaA box (a 9 base pair repeat at the origin) and separates the double-stranded (ds)DNA. Forms a right-handed helical filament on oriC DNA; dsDNA binds to the exterior of the filament while single-stranded (ss)DNA is stabiized in the filament's interior. The ATP-DnaA-oriC complex binds and stabilizes one strand of the AT-rich DNA unwinding element (DUE), permitting loading of DNA polymerase. After initiation quickly degrades to an ADP-DnaA complex that is not apt for DNA replication. Binds acidic phospholipids. In Geobacter sulfurreducens (strain ATCC 51573 / DSM 12127 / PCA), this protein is Chromosomal replication initiator protein DnaA.